The sequence spans 707 residues: MPELRGGVWRARLRSKKVYDVQDADPAASPVSPAPRGRTGRRGGAAAGRGNKTVAEGGGRKALKPRGKGCRAVDLCKDQPCKDLPEVIARKAVTGKAQEDLGLNKVADRAANLMMDGESGDKFAAAEDESTTTPVPERVQVGNSPEYITDRKLGKGGFGQVYVGRRVSGGGSRTGPDAQEVALKFEHRSSKGCNYGPPYEWQVYHTLNGCYGIPSVHYKGRLGDYYILVMDMLGPSLWDVWNSVGQAMSAHMVACIAVEAISILEKLHSKGFVHGDVKPENFLLGHPGSVDEKKLFLIDLGLASRWKEASSGQHVDYDQRPDVFRGTIRYASVHAHLGRTGSRRDDLESLAYTLIFLIRGRLPWQGYQGDNKSFLVCKKKMATSPELLCCFCPAPFKHFLEMVTNMKFDEEPNYPKLISLFDGLIEGPASRPIRIDGALKVGQKRGRMVVNLDDDEQPKKKVRLGSPATQWISVYNARRPMKQRYHYNVADSRLHQHIEKGNEDGLYISCVSSSANFWALIMDAGTGFCSQVYELSQVFLHKDWIMEQWEKNYYITAIAGATNGSSLVVMSKGTPYTQQSYKVSESFPYKWINKKWKEGFHVTSMATAGNRWGVVMSRNAGYSHQVVELDFLYPSEGIHRRWETGYRITSTAATPDQAAFILSIPKRKPMDETQETLRTSSFPSNHVKEKWSKNLYIASICYGRTVC.

The segment at 19-67 (YDVQDADPAASPVSPAPRGRTGRRGGAAAGRGNKTVAEGGGRKALKPRG) is disordered. Residues 24 to 37 (ADPAASPVSPAPRG) show a composition bias toward low complexity. The 279-residue stretch at 147–425 (YITDRKLGKG…KLISLFDGLI (279 aa)) folds into the Protein kinase domain. Residues 153–161 (LGKGGFGQV) and lysine 184 contribute to the ATP site. Aspartate 276 acts as the Proton acceptor in catalysis.

This sequence belongs to the protein kinase superfamily. CK1 Ser/Thr protein kinase family. Casein kinase I subfamily. Monomer. Interacts with GHD7 (via C-terminus). Interacts with SLR1. In terms of processing, autophosphorylated. As to expression, expressed in roots, leaves and stems. Expressed in leaf vascular bundles, and proximal regions of the shoot and roots.

The protein localises to the cytoplasm. It is found in the nucleus. It catalyses the reaction L-seryl-[protein] + ATP = O-phospho-L-seryl-[protein] + ADP + H(+). The catalysed reaction is L-threonyl-[protein] + ATP = O-phospho-L-threonyl-[protein] + ADP + H(+). In terms of biological role, casein kinases are operationally defined by their preferential utilization of acidic proteins such as caseins as substrates. It can phosphorylate a large number of proteins. Can phosphorylate casein on threonine residues in vitro. Involved in the regulation of flowering time through gibberellin (GA) signaling, and independently of photoperiod. Phosphorylates the DELLA protein SLR1, stabilizing SLR1 protein and sustaining SLR1 activity as repressor of GA signaling. Required for normal development of male floral organs and grains, through modulation of GA signaling. Targeted and repressed by the homeobox protein HAZ1 during GA signaling. Can phosphorylate phosvitin and SLR1 in vitro. Is not required for clock function in either the presence or the absence of light signals. Involved in a genetic control pathway for photoperiodic flowering under long day (LD) conditions that includes HD1, GHD7, HD5 and HD2. Phosphorylates and activates GHD7, a major floral repressor under LD conditions. Phosphorylation of GHD7 enhances its function in the repression of EHD1, HD3A and HD3B/RFT1, and obviously delaying flowering. This chain is Casein kinase 1-like protein HD16, found in Oryza sativa subsp. japonica (Rice).